A 661-amino-acid chain; its full sequence is Threonine--tRNA ligase (661 aa).

A TGS domain is found at 1 to 64; sequence MSHSVSLTFP…ADGKIEIVTR (64 aa). Residues 245–547 are catalytic; it reads DHRRLGREMD…LLENYAGHMP (303 aa). 3 residues coordinate Zn(2+): Cys-341, His-392, and His-524.

This sequence belongs to the class-II aminoacyl-tRNA synthetase family. As to quaternary structure, homodimer. Zn(2+) is required as a cofactor.

It is found in the cytoplasm. It catalyses the reaction tRNA(Thr) + L-threonine + ATP = L-threonyl-tRNA(Thr) + AMP + diphosphate + H(+). Functionally, catalyzes the attachment of threonine to tRNA(Thr) in a two-step reaction: L-threonine is first activated by ATP to form Thr-AMP and then transferred to the acceptor end of tRNA(Thr). Also edits incorrectly charged L-seryl-tRNA(Thr). This Sinorhizobium fredii (strain NBRC 101917 / NGR234) protein is Threonine--tRNA ligase.